Consider the following 364-residue polypeptide: 3-isopropylmalate dehydrogenase (364 aa).

G76–E89 is a binding site for NAD(+). Positions 96, 106, 134, and 223 each coordinate substrate. Mg(2+) is bound by residues D223, D247, and D251. G281–N293 contacts NAD(+).

It belongs to the isocitrate and isopropylmalate dehydrogenases family. LeuB type 1 subfamily. As to quaternary structure, homodimer. Mg(2+) serves as cofactor. Requires Mn(2+) as cofactor.

Its subcellular location is the cytoplasm. It carries out the reaction (2R,3S)-3-isopropylmalate + NAD(+) = 4-methyl-2-oxopentanoate + CO2 + NADH. It functions in the pathway amino-acid biosynthesis; L-leucine biosynthesis; L-leucine from 3-methyl-2-oxobutanoate: step 3/4. Functionally, catalyzes the oxidation of 3-carboxy-2-hydroxy-4-methylpentanoate (3-isopropylmalate) to 3-carboxy-4-methyl-2-oxopentanoate. The product decarboxylates to 4-methyl-2 oxopentanoate. This chain is 3-isopropylmalate dehydrogenase, found in Shouchella clausii (strain KSM-K16) (Alkalihalobacillus clausii).